We begin with the raw amino-acid sequence, 272 residues long: uncharacterized protein (272 aa).

4 helical membrane passes run 9–29, 38–58, 154–174, and 188–208; these read PVGFVLGTIIIVIGIISGSGV, LTSFFIVTGGLCAAVFISFPP, AGEFAPAWGMIGTLVGLVLML, and AIALLTTLYGSLLANMVFNPI. Topologically, residues 209 to 272 are cytoplasmic; that stretch reads AAKLEEKTES…KTKKGSVHEA (64 aa).

The protein belongs to the MotA family.

The protein resides in the cell membrane. In terms of biological role, may be involved in some transport function. This is an uncharacterized protein from Bacillus subtilis (strain 168).